The primary structure comprises 454 residues: Histidine--tRNA ligase (454 aa).

The segment at 434–454 is disordered; the sequence is ADAGAWNPPTEDLHPGVIGTW.

This sequence belongs to the class-II aminoacyl-tRNA synthetase family. Homodimer.

It localises to the cytoplasm. The enzyme catalyses tRNA(His) + L-histidine + ATP = L-histidyl-tRNA(His) + AMP + diphosphate + H(+). This Cutibacterium acnes (strain DSM 16379 / KPA171202) (Propionibacterium acnes) protein is Histidine--tRNA ligase (hisS).